The sequence spans 422 residues: Serine hydroxymethyltransferase 2 (422 aa).

Residues L121 and 125-127 (GHL) contribute to the (6S)-5,6,7,8-tetrahydrofolate site. K230 bears the N6-(pyridoxal phosphate)lysine mark.

Belongs to the SHMT family. In terms of assembly, homodimer. The cofactor is pyridoxal 5'-phosphate.

Its subcellular location is the cytoplasm. It catalyses the reaction (6R)-5,10-methylene-5,6,7,8-tetrahydrofolate + glycine + H2O = (6S)-5,6,7,8-tetrahydrofolate + L-serine. It functions in the pathway one-carbon metabolism; tetrahydrofolate interconversion. Its pathway is amino-acid biosynthesis; glycine biosynthesis; glycine from L-serine: step 1/1. In terms of biological role, catalyzes the reversible interconversion of serine and glycine with tetrahydrofolate (THF) serving as the one-carbon carrier. This reaction serves as the major source of one-carbon groups required for the biosynthesis of purines, thymidylate, methionine, and other important biomolecules. Also exhibits THF-independent aldolase activity toward beta-hydroxyamino acids, producing glycine and aldehydes, via a retro-aldol mechanism. The protein is Serine hydroxymethyltransferase 2 of Agrobacterium fabrum (strain C58 / ATCC 33970) (Agrobacterium tumefaciens (strain C58)).